Reading from the N-terminus, the 267-residue chain is MATKILSLLALLALFASATNASIIPQCSLAPSSIIPQFLPPVTSMAFEHPAVQAYRLQQAIAASVLQQPIAQLQQQSLAHLTIQTIATQQQQQQFLPALSHLAMVNPVAYLQQQLLASNPLALANVVANQQQQQLQQFLPALSQLAMVNPAAYLQQQQLLSSSPLAVANAPTYLQQELLQQIVPALTQLAVANPVAYLQQLLPFNQLTMSNSVAYLQQRQQLLNPLAVANPLVAAFLQQQQLLPYNRFSLMNPVLSRQQPIVGGAIF.

A signal peptide spans 1–21 (MATKILSLLALLALFASATNA).

This sequence belongs to the zein family.

In terms of biological role, zeins are major seed storage proteins. The polypeptide is 22 kDa alpha-zein 14 (Zea mays (Maize)).